Consider the following 31-residue polypeptide: Cytochrome b6-f complex subunit 6 (31 aa).

Residues 4 to 24 (ITSYFGFLLAALTITSALFIG) form a helical membrane-spanning segment.

The protein belongs to the PetL family. The 4 large subunits of the cytochrome b6-f complex are cytochrome b6, subunit IV (17 kDa polypeptide, PetD), cytochrome f and the Rieske protein, while the 4 small subunits are PetG, PetL, PetM and PetN. The complex functions as a dimer.

The protein localises to the plastid. The protein resides in the chloroplast thylakoid membrane. Its function is as follows. Component of the cytochrome b6-f complex, which mediates electron transfer between photosystem II (PSII) and photosystem I (PSI), cyclic electron flow around PSI, and state transitions. PetL is important for photoautotrophic growth as well as for electron transfer efficiency and stability of the cytochrome b6-f complex. In Coffea arabica (Arabian coffee), this protein is Cytochrome b6-f complex subunit 6.